We begin with the raw amino-acid sequence, 352 residues long: UDP-N-acetylglucosamine--N-acetylmuramyl-(pentapeptide) pyrophosphoryl-undecaprenol N-acetylglucosamine transferase 2 (352 aa).

UDP-N-acetyl-alpha-D-glucosamine contacts are provided by residues 11–13 (SAG), arginine 164, serine 194, and glutamine 289.

The protein belongs to the glycosyltransferase 28 family. MurG subfamily.

The protein localises to the cell membrane. The catalysed reaction is di-trans,octa-cis-undecaprenyl diphospho-N-acetyl-alpha-D-muramoyl-L-alanyl-D-glutamyl-meso-2,6-diaminopimeloyl-D-alanyl-D-alanine + UDP-N-acetyl-alpha-D-glucosamine = di-trans,octa-cis-undecaprenyl diphospho-[N-acetyl-alpha-D-glucosaminyl-(1-&gt;4)]-N-acetyl-alpha-D-muramoyl-L-alanyl-D-glutamyl-meso-2,6-diaminopimeloyl-D-alanyl-D-alanine + UDP + H(+). It functions in the pathway cell wall biogenesis; peptidoglycan biosynthesis. In terms of biological role, cell wall formation. Catalyzes the transfer of a GlcNAc subunit on undecaprenyl-pyrophosphoryl-MurNAc-pentapeptide (lipid intermediate I) to form undecaprenyl-pyrophosphoryl-MurNAc-(pentapeptide)GlcNAc (lipid intermediate II). This Bacillus thuringiensis subsp. konkukian (strain 97-27) protein is UDP-N-acetylglucosamine--N-acetylmuramyl-(pentapeptide) pyrophosphoryl-undecaprenol N-acetylglucosamine transferase 2.